We begin with the raw amino-acid sequence, 320 residues long: Phospho-N-acetylmuramoyl-pentapeptide-transferase (320 aa).

9 consecutive transmembrane segments (helical) span residues 5-25, 51-71, 76-96, 124-144, 145-165, 176-196, 198-218, 233-255, and 298-318; these read LWALARAFIITVVFMPFLIKF, MGGLLFVLAAAISAFIGGAAY, GVVAMIIPVFALVAYAIIGGI, VVIMLIMWLLGVPFTLYIPMI, GTINLGLFYFVFLWFWLVGWS, GLLAGNSVVVYAAYTVIAMHM, NHIIVLFNFSIIGGLLGFLIF, LALGAGLAIESILLGVPFSLIWF, and WQIDLLFWIVSSILAVAGIFY.

It belongs to the glycosyltransferase 4 family. MraY subfamily. It depends on Mg(2+) as a cofactor.

It localises to the cell membrane. The catalysed reaction is UDP-N-acetyl-alpha-D-muramoyl-L-alanyl-gamma-D-glutamyl-L-lysyl-D-alanyl-D-alanine + di-trans,octa-cis-undecaprenyl phosphate = Mur2Ac(oyl-L-Ala-gamma-D-Glu-L-Lys-D-Ala-D-Ala)-di-trans,octa-cis-undecaprenyl diphosphate + UMP. It functions in the pathway cell wall biogenesis; peptidoglycan biosynthesis. In terms of biological role, catalyzes the initial step of the lipid cycle reactions in the biosynthesis of the cell wall peptidoglycan: transfers peptidoglycan precursor phospho-MurNAc-pentapeptide from UDP-MurNAc-pentapeptide onto the lipid carrier undecaprenyl phosphate, yielding undecaprenyl-pyrophosphoryl-MurNAc-pentapeptide, known as lipid I. The polypeptide is Phospho-N-acetylmuramoyl-pentapeptide-transferase (Leuconostoc citreum (strain KM20)).